The chain runs to 770 residues: Kinesin-like protein klpA (770 aa).

Residues 1–152 (MENVQSRMQG…GLGKRGEWDQ (152 aa)) form a disordered region. A compositionally biased stretch (low complexity) spans 85–105 (SSTLTRSASAASRPRGPLSSS). Residues 106–119 (TSGRPKTSMSTSRR) show a composition bias toward polar residues. The segment covering 134-152 (THQEERSYGGLGKRGEWDQ) has biased composition (basic and acidic residues). A coiled-coil region spans residues 175 to 425 (QESSGLKDAL…QELKGNIRVF (251 aa)). In terms of domain architecture, Kinesin motor spans 421-756 (NIRVFCRVRP…LKFATKVHNT (336 aa)). Position 514 to 521 (514 to 521 (GQTGSGKT)) interacts with ATP.

Belongs to the TRAFAC class myosin-kinesin ATPase superfamily. Kinesin family. NCD subfamily.

It is found in the cytoplasm. Its subcellular location is the cytoskeleton. This chain is Kinesin-like protein klpA (klpA), found in Emericella nidulans (strain FGSC A4 / ATCC 38163 / CBS 112.46 / NRRL 194 / M139) (Aspergillus nidulans).